The primary structure comprises 329 residues: Protein PRY2 (329 aa).

A signal peptide spans 1-18 (MKFSKVSLLAASASVALS). Over residues 122–131 (TSASATQDDV) the composition is skewed to polar residues. A disordered region spans residues 122–197 (TSASATQDDV…SSSDFSTSMV (76 aa)). Residues 132 to 190 (TTTLTSSTQPTSTTTPTTTTTSPTTTTSPTTTASPTTTASPTTATTTQSTASSTQSSSS) show a composition bias toward low complexity. The region spanning 197–311 (VNEHNTKRAL…EWGDYIICSY (115 aa)) is the SCP domain.

It belongs to the CRISP family. In terms of processing, O-glycosylated.

Its subcellular location is the secreted. Its function is as follows. Secreted protein required for efficient export of lipids such as acetylated sterols. Acts in detoxification of hydrophobic compounds. The chain is Protein PRY2 (PRY2) from Saccharomyces cerevisiae (strain ATCC 204508 / S288c) (Baker's yeast).